The primary structure comprises 276 residues: Orotidine 5'-phosphate decarboxylase (276 aa).

The active-site Proton donor is lysine 95.

Belongs to the OMP decarboxylase family. Type 2 subfamily.

The enzyme catalyses orotidine 5'-phosphate + H(+) = UMP + CO2. It functions in the pathway pyrimidine metabolism; UMP biosynthesis via de novo pathway; UMP from orotate: step 2/2. The polypeptide is Orotidine 5'-phosphate decarboxylase (pyrF) (Mycolicibacterium smegmatis (strain ATCC 700084 / mc(2)155) (Mycobacterium smegmatis)).